We begin with the raw amino-acid sequence, 121 residues long: Protein FAM241B (121 aa).

The segment at 12 to 58 is disordered; it reads QDDDPRVRTTTQPPRGSIPRQSFFNRGHGAPPGGPGPRQQQAGARLG. Polar residues predominate over residues 19 to 35; it reads RTTTQPPRGSIPRQSFF. Serine 33 is subject to Phosphoserine. Positions 48–58 are enriched in low complexity; sequence PRQQQAGARLG. Position 62 is a phosphoserine (serine 62). The chain crosses the membrane as a helical span at residues 92–112; it reads ILLLFLLMMLGVRGLLLVGLV.

It belongs to the FAM241 family.

The protein resides in the membrane. May play a role in lysosome homeostasis. The chain is Protein FAM241B from Homo sapiens (Human).